An 87-amino-acid chain; its full sequence is Probable acyl carrier protein PigG (87 aa).

The Carrier domain maps to 1–78; sequence MLESKLINHI…SMVALVQRLK (78 aa). Ser-36 is subject to O-(pantetheine 4'-phosphoryl)serine.

It participates in antibiotic biosynthesis; prodigiosin biosynthesis. Involved in the biosynthesis of 4-methoxy-2,2'-bipyrrole-5-carbaldehyde (MBC), one of the terminal products involved in the biosynthesis of the red antibiotic prodigiosin (Pig). Carrier of the L-prolyl group transferred from L-prolyl-AMP by PigI. This chain is Probable acyl carrier protein PigG, found in Serratia sp. (strain ATCC 39006) (Prodigiosinella confusarubida).